A 185-amino-acid polypeptide reads, in one-letter code: ATP synthase subunit delta (185 aa).

Belongs to the ATPase delta chain family. In terms of assembly, F-type ATPases have 2 components, F(1) - the catalytic core - and F(0) - the membrane proton channel. F(1) has five subunits: alpha(3), beta(3), gamma(1), delta(1), epsilon(1). F(0) has three main subunits: a(1), b(2) and c(10-14). The alpha and beta chains form an alternating ring which encloses part of the gamma chain. F(1) is attached to F(0) by a central stalk formed by the gamma and epsilon chains, while a peripheral stalk is formed by the delta and b chains.

Its subcellular location is the cell inner membrane. Its function is as follows. F(1)F(0) ATP synthase produces ATP from ADP in the presence of a proton or sodium gradient. F-type ATPases consist of two structural domains, F(1) containing the extramembraneous catalytic core and F(0) containing the membrane proton channel, linked together by a central stalk and a peripheral stalk. During catalysis, ATP synthesis in the catalytic domain of F(1) is coupled via a rotary mechanism of the central stalk subunits to proton translocation. This protein is part of the stalk that links CF(0) to CF(1). It either transmits conformational changes from CF(0) to CF(1) or is implicated in proton conduction. The chain is ATP synthase subunit delta from Coxiella burnetii (strain CbuK_Q154) (Coxiella burnetii (strain Q154)).